The chain runs to 512 residues: Maturase K (512 aa).

The protein belongs to the intron maturase 2 family. MatK subfamily.

The protein resides in the plastid. It localises to the chloroplast. Its function is as follows. Usually encoded in the trnK tRNA gene intron. Probably assists in splicing its own and other chloroplast group II introns. In Erythranthe guttata (Yellow monkey flower), this protein is Maturase K.